We begin with the raw amino-acid sequence, 139 residues long: Cuticle protein 6 (139 aa).

Glutamine 1 is subject to Pyrrolidone carboxylic acid. In terms of domain architecture, Chitin-binding type R&amp;R spans 31–92 (LGQFAFHHAG…VGANNLPEAP (62 aa)).

This chain is Cuticle protein 6, found in Blaberus craniifer (Death's head cockroach).